Reading from the N-terminus, the 188-residue chain is Elongation factor P (188 aa).

The protein belongs to the elongation factor P family.

The protein localises to the cytoplasm. It participates in protein biosynthesis; polypeptide chain elongation. Involved in peptide bond synthesis. Stimulates efficient translation and peptide-bond synthesis on native or reconstituted 70S ribosomes in vitro. Probably functions indirectly by altering the affinity of the ribosome for aminoacyl-tRNA, thus increasing their reactivity as acceptors for peptidyl transferase. The polypeptide is Elongation factor P (Pelodictyon phaeoclathratiforme (strain DSM 5477 / BU-1)).